The following is a 244-amino-acid chain: N-(5'-phosphoribosyl)anthranilate isomerase 3, chloroplastic (244 aa).

The N-terminal 32 residues, 1-32 (MSTGISSDLHLHPRALNFSKTSKSGLSNRKVS), are a transit peptide targeting the chloroplast.

It belongs to the TrpF family.

The protein localises to the plastid. The protein resides in the chloroplast. It catalyses the reaction N-(5-phospho-beta-D-ribosyl)anthranilate = 1-(2-carboxyphenylamino)-1-deoxy-D-ribulose 5-phosphate. It functions in the pathway amino-acid biosynthesis; L-tryptophan biosynthesis; L-tryptophan from chorismate: step 3/5. The chain is N-(5'-phosphoribosyl)anthranilate isomerase 3, chloroplastic (PAI3) from Arabidopsis thaliana (Mouse-ear cress).